The sequence spans 192 residues: Transcription termination/antitermination protein NusG (192 aa).

The protein belongs to the NusG family.

Functionally, participates in transcription elongation, termination and antitermination. The sequence is that of Transcription termination/antitermination protein NusG from Rickettsia prowazekii (strain Madrid E).